Consider the following 289-residue polypeptide: MYG1 protein CT_386 (289 aa).

The protein belongs to the MYG1 family.

This Chlamydia trachomatis serovar D (strain ATCC VR-885 / DSM 19411 / UW-3/Cx) protein is MYG1 protein CT_386.